A 302-amino-acid polypeptide reads, in one-letter code: Segregation and condensation protein A (302 aa).

Belongs to the ScpA family. As to quaternary structure, component of a cohesin-like complex composed of ScpA, ScpB and the Smc homodimer, in which ScpA and ScpB bind to the head domain of Smc. The presence of the three proteins is required for the association of the complex with DNA.

It localises to the cytoplasm. Participates in chromosomal partition during cell division. May act via the formation of a condensin-like complex containing Smc and ScpB that pull DNA away from mid-cell into both cell halves. In Xylella fastidiosa (strain Temecula1 / ATCC 700964), this protein is Segregation and condensation protein A.